Consider the following 34-residue polypeptide: Turripeptide OL127 (34 aa).

Post-translationally, contains 4 disulfide bonds. As to expression, expressed by the venom duct.

The protein localises to the secreted. Functionally, acts as a neurotoxin by inhibiting an ion channel. This chain is Turripeptide OL127, found in Iotyrris olangoensis (Sea snail).